Here is a 412-residue protein sequence, read N- to C-terminus: Ribosomal RNA large subunit methyltransferase G (412 aa).

The interval 386–412 is disordered; the sequence is KAEPHENGESSSDTPNPQSSLYGGVKR. Over residues 394-406 the composition is skewed to polar residues; that stretch reads ESSSDTPNPQSSL.

The protein belongs to the methyltransferase superfamily. RlmG family.

The protein localises to the cytoplasm. The catalysed reaction is guanosine(1835) in 23S rRNA + S-adenosyl-L-methionine = N(2)-methylguanosine(1835) in 23S rRNA + S-adenosyl-L-homocysteine + H(+). Functionally, specifically methylates the guanine in position 1835 (m2G1835) of 23S rRNA. This chain is Ribosomal RNA large subunit methyltransferase G, found in Shewanella sediminis (strain HAW-EB3).